A 226-amino-acid chain; its full sequence is Thioredoxin domain-containing protein 9 (226 aa).

Residues 52 to 180 (LEALKKAQQQ…TTETLEWRLG (129 aa)) form the Thioredoxin domain. S188, S221, and S223 each carry phosphoserine.

Forms ternary complexes with the chaperonin TCP1 complex, spanning the cylindrical chaperonin cavity and contacting at least 2 subunits.

It is found in the cytoplasm. The protein localises to the nucleus. Its subcellular location is the cytoskeleton. It localises to the microtubule organizing center. The protein resides in the centrosome. It is found in the midbody. In terms of biological role, significantly diminishes the chaperonin TCP1 complex ATPase activity, thus negatively impacts protein folding, including that of actin or tubulin. This chain is Thioredoxin domain-containing protein 9 (TXNDC9), found in Bos taurus (Bovine).